The sequence spans 447 residues: Serine/threonine-protein phosphatase 2A 55 kDa regulatory subunit B gamma isoform (447 aa).

7 WD repeats span residues 22–61, 87–128, 171–209, 220–260, 279–317, 334–375, and 410–446; these read TPAD…KNAP, EIEE…KRPE, GHTY…RSFN, DLTE…LCDK, EIIS…RPIE, ENDC…DVTL, and DFTK…NSDM.

Belongs to the phosphatase 2A regulatory subunit B family. As to quaternary structure, PP2A consists of a common heterodimeric core enzyme, composed of a 36 kDa catalytic subunit (subunit C) and a 65 kDa constant regulatory subunit (PR65 or subunit A), that associates with a variety of regulatory subunits. Proteins that associate with the core dimer include three families of regulatory subunits B (the R2/B/PR55/B55, R3/B''/PR72/PR130/PR59 and R5/B'/B56 families), the 48 kDa variable regulatory subunit, viral proteins, and cell signaling molecules. Interacts with IER5.

Its function is as follows. The B regulatory subunit might modulate substrate selectivity and catalytic activity, and might also direct the localization of the catalytic enzyme to a particular subcellular compartment. The sequence is that of Serine/threonine-protein phosphatase 2A 55 kDa regulatory subunit B gamma isoform (PPP2R2C) from Macaca fascicularis (Crab-eating macaque).